Here is a 552-residue protein sequence, read N- to C-terminus: Transcription factor lcsF (552 aa).

Disordered stretches follow at residues 1–132, 169–209, 232–258, and 297–349; these read MAPA…DLDP, TSSY…ASLS, EATS…HWSS, and ELTS…QHGA. The interval 31-55 is basic motif; the sequence is KDRKEKKRIQNRVAQRSYRSRMKAR. One can recognise a bZIP domain in the interval 31 to 76; it reads KDRKEKKRIQNRVAQRSYRSRMKARLGELQSRLQAHEEQKAKEEAE. A leucine-zipper region spans residues 56 to 63; the sequence is LGELQSRL. Positions 64–79 are enriched in basic and acidic residues; that stretch reads QAHEEQKAKEEAERCD. Composition is skewed to polar residues over residues 98-119 and 169-186; these read TPPS…NSAS and TSSY…SLSQ. A compositionally biased stretch (polar residues) spans 298–347; sequence LTSTGDLPNATWRPSQQFSGPETTPRSHNAENPTQQQSPINDDTPSTTQH.

Belongs to the bZIP family.

It is found in the nucleus. In terms of biological role, transcription factor that regulates the expression of the gene cluster that mediates the biosynthesis of the lipopeptide antibiotics leucinostatins that show extensive biological activities, including antimalarial, antiviral, antibacterial, antifungal, and antitumor activities, as well as phytotoxic. All 20 genes in the cluster are up-regulated to some extent by lcsF, with the exception of lcsL and lcsP, which are down-regulated. The polypeptide is Transcription factor lcsF (Purpureocillium lilacinum (Paecilomyces lilacinus)).